Reading from the N-terminus, the 339-residue chain is MKLAVIGGDGIGPEVTAEALKVLRAVRQDVEVTDYDLGARRYLRNGELLSDADFASLREHDAILLGAIGAPGEVPPGVLERGLLLKMRFALDHHVNLRPSKLYPTSTSPLANPGDIDFVVVREGTEGLYCGNGGTLREGTEHEVASEVSQNTRFGVERVVRDAFQRAMGRRKHVTLVHKTNVLVNAGGLWQRTVNEVAQEFPEVTVDYNHIDAATIYMVTDPARYDVIVTDNLFGDILTDLAGAVTGGIGLAASGNIDASGANPSMFEPVHGSAPDIAGKGIADPTAAILSAAMLLRHLGDEENAVRIEEAVAADVSARGDAQARTTEIGDRIAAALSA.

The substrate site is built by arginine 88, arginine 98, arginine 122, and aspartate 212. Aspartate 212, aspartate 236, and aspartate 240 together coordinate Mg(2+). Position 272–284 (272–284 (GSAPDIAGKGIAD)) interacts with NAD(+).

The protein belongs to the isocitrate and isopropylmalate dehydrogenases family. LeuB type 2 subfamily. Homodimer. Mg(2+) serves as cofactor. Requires Mn(2+) as cofactor.

The protein resides in the cytoplasm. It catalyses the reaction (2R,3S)-3-isopropylmalate + NAD(+) = 4-methyl-2-oxopentanoate + CO2 + NADH. Its pathway is amino-acid biosynthesis; L-leucine biosynthesis; L-leucine from 3-methyl-2-oxobutanoate: step 3/4. Catalyzes the oxidation of 3-carboxy-2-hydroxy-4-methylpentanoate (3-isopropylmalate) to 3-carboxy-4-methyl-2-oxopentanoate. The product decarboxylates to 4-methyl-2 oxopentanoate. The protein is 3-isopropylmalate dehydrogenase of Corynebacterium aurimucosum (strain ATCC 700975 / DSM 44827 / CIP 107346 / CN-1) (Corynebacterium nigricans).